The following is a 766-amino-acid chain: LPS-assembly protein LptD (766 aa).

The N-terminal stretch at 1-18 is a signal peptide; it reads MQIRYFLALSLLPNIVLA.

Belongs to the LptD family. Component of the lipopolysaccharide transport and assembly complex. Interacts with LptE and LptA.

It localises to the cell outer membrane. Its function is as follows. Together with LptE, is involved in the assembly of lipopolysaccharide (LPS) at the surface of the outer membrane. The sequence is that of LPS-assembly protein LptD from Shewanella frigidimarina (strain NCIMB 400).